The sequence spans 314 residues: tRNA-cytidine(32) 2-sulfurtransferase (314 aa).

The PP-loop motif motif lies at 39 to 44 (SGGKDS). Residues Cys-114, Cys-117, and Cys-205 each coordinate [4Fe-4S] cluster.

The protein belongs to the TtcA family. In terms of assembly, homodimer. Mg(2+) is required as a cofactor. The cofactor is [4Fe-4S] cluster.

Its subcellular location is the cytoplasm. The enzyme catalyses cytidine(32) in tRNA + S-sulfanyl-L-cysteinyl-[cysteine desulfurase] + AH2 + ATP = 2-thiocytidine(32) in tRNA + L-cysteinyl-[cysteine desulfurase] + A + AMP + diphosphate + H(+). It participates in tRNA modification. Catalyzes the ATP-dependent 2-thiolation of cytidine in position 32 of tRNA, to form 2-thiocytidine (s(2)C32). The sulfur atoms are provided by the cysteine/cysteine desulfurase (IscS) system. The polypeptide is tRNA-cytidine(32) 2-sulfurtransferase (Cupriavidus necator (strain ATCC 17699 / DSM 428 / KCTC 22496 / NCIMB 10442 / H16 / Stanier 337) (Ralstonia eutropha)).